The chain runs to 527 residues: MTTQAAEVAKRRTFAIISHPDAGKTTITEKLLLMGKAIAVAGTVKSRKSDRHATSDWMEMEKQRGISITTSVMQFPYREHMINLLDTPGHEDFSEDTYRTLTAVDSALMVLDGGKGVEPRTIALMEVCRLRDTPIVSFINKLDRDIRDPIELLDEIEAVLKIKAAPITWPIGCYKDFKGVYHLADDRIIVYVPGHGHERIETKVIEKLDSDEARAHLGDLYDNFVEELELVQGACHEFDKDAFLKGEMTPVFFGTALGNFGVDQVLDCIVDWAPQPLSRATHERSVEPTEEKFSGFVFKIQANMDPKHRDRIAFMRICSGKYEKGMKMRHVRLGKDVKIADALTFFSSEREQLEEAYAGDIIGLHNHGTIQIGDTFSEGENFGFTGIPHFAPELFRRVRLKDPLKSKQLRQGLQELAEEGATQVFFPERNNDIILGAVGVLQFDVVASRLKEEYKVECAYEAINVWSARWIECDDEKKLKEFKDKAFENLSVDGGGHLTYLAPTRVNLSLMEERWPDIRFRATREHH.

Residues 9-277 enclose the tr-type G domain; it reads AKRRTFAIIS…CIVDWAPQPL (269 aa). GTP is bound by residues 18-25, 86-90, and 140-143; these read SHPDAGKT, DTPGH, and NKLD.

It belongs to the TRAFAC class translation factor GTPase superfamily. Classic translation factor GTPase family. PrfC subfamily.

It is found in the cytoplasm. Functionally, increases the formation of ribosomal termination complexes and stimulates activities of RF-1 and RF-2. It binds guanine nucleotides and has strong preference for UGA stop codons. It may interact directly with the ribosome. The stimulation of RF-1 and RF-2 is significantly reduced by GTP and GDP, but not by GMP. This is Peptide chain release factor 3 from Pseudomonas aeruginosa (strain LESB58).